The sequence spans 79 residues: Small ribosomal subunit protein uS17 (79 aa).

It belongs to the universal ribosomal protein uS17 family. Part of the 30S ribosomal subunit.

Functionally, one of the primary rRNA binding proteins, it binds specifically to the 5'-end of 16S ribosomal RNA. The polypeptide is Small ribosomal subunit protein uS17 (Rhizobium etli (strain CIAT 652)).